The following is a 1439-amino-acid chain: ABC transporter G family member 14 (1439 aa).

The segment covering 1–17 (MEENSNKFEQELKEIGQ) has biased composition (basic and acidic residues). The tract at residues 1 to 21 (MEENSNKFEQELKEIGQDRNQ) is disordered. Residues 117–370 (FSILNFFKPS…FMSLGFDCEP (254 aa)) form the ABC transporter 1 domain. One can recognise an ABC transmembrane type-2 1 domain in the interval 475–700 (LNDKFGLFTK…GSEFDAYRIC (226 aa)). A run of 6 helical transmembrane segments spans residues 479–499 (FGLF…SSVF), 516–536 (ILSA…MTFI), 564–584 (IPFT…MFGL), 589–609 (GKFF…TALF), 614–634 (YLCP…IFML), and 734–754 (IIVY…MEYI). Residues 805–1049 (FTWQNIRYTV…LTSYFERHGV (245 aa)) enclose the ABC transporter 2 domain. 841-848 (GSSGAGKT) provides a ligand contact to ATP. An ABC transmembrane type-2 2 domain is found at 1141–1366 (YYTYGSFVQS…YNTCQNYTSA (226 aa)). The next 6 membrane-spanning stretches (helical) occupy residues 1144 to 1164 (YGSF…FWNL), 1175 to 1195 (IFFI…VMPQ), 1217 to 1237 (FAIS…TIFF), 1256 to 1276 (FYFW…GQAV), 1283 to 1303 (MFFA…FSGV), and 1413 to 1433 (VGII…FVYL).

Belongs to the ABC transporter superfamily. ABCG family. PDR (TC 3.A.1.205) subfamily.

It localises to the membrane. The polypeptide is ABC transporter G family member 14 (abcG14) (Dictyostelium discoideum (Social amoeba)).